The chain runs to 490 residues: Probable cytochrome P450 518B1 (490 aa).

The chain crosses the membrane as a helical span at residues 2-22 (LTNIIILIILYLFYDFCYKNF). Cys437 provides a ligand contact to heme.

The protein belongs to the cytochrome P450 family. Heme serves as cofactor.

The protein resides in the membrane. This chain is Probable cytochrome P450 518B1 (cyp518B1), found in Dictyostelium discoideum (Social amoeba).